Here is an 89-residue protein sequence, read N- to C-terminus: Dynein light chain 1, cytoplasmic (89 aa).

Position 36 is an N6-acetyllysine (Lys-36). Lys-43 participates in a covalent cross-link: Glycyl lysine isopeptide (Lys-Gly) (interchain with G-Cter in SUMO2). The tract at residues 67 to 89 (THETKHFIYFYLGQVAILLFKSG) is interaction with ESR1. Residue Ser-88 is modified to Phosphoserine.

This sequence belongs to the dynein light chain family. Homodimer. Monomer; the monomeric form is incapable of binding to target proteins. The cytoplasmic dynein 1 complex consists of two catalytic heavy chains (HCs) and a number of non-catalytic subunits presented by intermediate chains (ICs), light intermediate chains (LICs) and light chains (LCs); the composition seems to vary in respect to the IC, LIC and LC composition. The heavy chain homodimer serves as a scaffold for the probable homodimeric assembly of the respective non-catalytic subunits. The ICs and LICs bind directly to the HC dimer and the LCs assemble on the IC dimer. Interacts with TXNDC17. Interacts with WWC1 and ESR1. The WWC1-DYNLL1 interaction is mandatory for the recruitment and transactivation functions of ESR1 or DYNLL1 to the target chromatin. Interacts with BCL2L11. Interacts with BCL2; the interaction is greatly enhanced in the nucleus and in mitochondria upon induction of apoptosis. Interacts with PAK1; the interaction requires dimeric DYNLL1. Interacts with MYZAP. Part of an astrin (SPAG5)-kinastrin (SKAP) complex containing KNSTRN, SPAG5, PLK1, DYNLL1 and SGO2. Interacts with ATMIN; this interaction inhibits ATMIN transcriptional activity and hence may play a role in a feedback loop whereby DYNLL1 inhibits transactivation of its own promoter by ATMIN. Interacts with NEK9 (not phosphorylated at 'Ser-944'). Interacts with BICD2. Interacts with BCAS1. Interacts with Basson/BSN. Interacts with HDAC6. Interacts with TPPP. Interacts with AMBRA1 (via TQT motifs); tethering AMBRA1 to the cytoskeleton. Interacts with FAM83D/CHICA (via C-terminus). Interacts with HMMR, SPAG5/Astrin and KNSTRN/Kinastrin. Interacts with TLK2. Interacts with NOS1. Interacts with WWC1, WWC2 and WWC3. Interacts with MRE11; inhibiting MRE11 homodimerization and activity. In terms of assembly, (Microbial infection) Interacts with bovine immunodeficiency virus Gag protein; this interaction is critical for intracellular microtubule-dependent viral genome transport. Post-translationally, phosphorylation at Ser-88 promotes recruitment to DNA double-strand breaks (DSBs) by TP53BP1 and ability to inhibit MRE11.

The protein resides in the cytoplasm. The protein localises to the cytoskeleton. Its subcellular location is the microtubule organizing center. It localises to the centrosome. It is found in the chromosome. The protein resides in the nucleus. The protein localises to the mitochondrion. Acts as one of several non-catalytic accessory components of the cytoplasmic dynein 1 complex that are thought to be involved in linking dynein to cargos and to adapter proteins that regulate dynein function. Cytoplasmic dynein 1 acts as a motor for the intracellular retrograde motility of vesicles and organelles along microtubules. May play a role in changing or maintaining the spatial distribution of cytoskeletal structures. In addition to its role in cytoskeleton and transport, acts as a protein-protein adapter, which inhibits and/or sequesters target proteins. Involved in the response to DNA damage by acting as a key regulator of DNA end resection: when phosphorylated at Ser-88, recruited to DNA double-strand breaks (DSBs) by TP53BP1 and acts by disrupting MRE11 dimerization, thereby inhibiting DNA end resection. In a subset of DSBs, DYNLL1 remains unphosphorylated and promotes the recruitment of the Shieldin complex. Binds and inhibits the catalytic activity of neuronal nitric oxide synthase/NOS1. Promotes transactivation functions of ESR1 and plays a role in the nuclear localization of ESR1. Regulates apoptotic activities of BCL2L11 by sequestering it to microtubules. Upon apoptotic stimuli the BCL2L11-DYNLL1 complex dissociates from cytoplasmic dynein and translocates to mitochondria and sequesters BCL2 thus neutralizing its antiapoptotic activity. The protein is Dynein light chain 1, cytoplasmic (DYNLL1) of Bos taurus (Bovine).